The sequence spans 418 residues: Tyrosine--tRNA ligase (418 aa).

Tyr-34 is a binding site for L-tyrosine. A 'HIGH' region motif is present at residues 39–48 (PTADSLHLGH). L-tyrosine contacts are provided by Tyr-169 and Gln-173. Residues 229–233 (KFGKS) carry the 'KMSKS' region motif. Lys-232 contributes to the ATP binding site. Positions 352 to 418 (LNLVDMLVTA…GKKKYAVLTY (67 aa)) constitute an S4 RNA-binding domain.

The protein belongs to the class-I aminoacyl-tRNA synthetase family. TyrS type 1 subfamily. Homodimer.

The protein localises to the cytoplasm. The catalysed reaction is tRNA(Tyr) + L-tyrosine + ATP = L-tyrosyl-tRNA(Tyr) + AMP + diphosphate + H(+). Its function is as follows. Catalyzes the attachment of tyrosine to tRNA(Tyr) in a two-step reaction: tyrosine is first activated by ATP to form Tyr-AMP and then transferred to the acceptor end of tRNA(Tyr). The protein is Tyrosine--tRNA ligase of Streptococcus pyogenes serotype M28 (strain MGAS6180).